Reading from the N-terminus, the 631-residue chain is Phosphomethylpyrimidine synthase (631 aa).

Substrate is bound by residues N239, M268, Y297, H333, 353-355, 394-397, and E433; these read SRG and DGLR. H437 contributes to the Zn(2+) binding site. Y460 contributes to the substrate binding site. Residue H501 coordinates Zn(2+). Residues C581, C584, and C589 each coordinate [4Fe-4S] cluster.

Belongs to the ThiC family. As to quaternary structure, homodimer. It depends on [4Fe-4S] cluster as a cofactor.

The catalysed reaction is 5-amino-1-(5-phospho-beta-D-ribosyl)imidazole + S-adenosyl-L-methionine = 4-amino-2-methyl-5-(phosphooxymethyl)pyrimidine + CO + 5'-deoxyadenosine + formate + L-methionine + 3 H(+). Its pathway is cofactor biosynthesis; thiamine diphosphate biosynthesis. Its function is as follows. Catalyzes the synthesis of the hydroxymethylpyrimidine phosphate (HMP-P) moiety of thiamine from aminoimidazole ribotide (AIR) in a radical S-adenosyl-L-methionine (SAM)-dependent reaction. The polypeptide is Phosphomethylpyrimidine synthase (Escherichia coli O6:H1 (strain CFT073 / ATCC 700928 / UPEC)).